A 269-amino-acid polypeptide reads, in one-letter code: 5'-nucleotidase SurE (269 aa).

Residues Asp-11, Asp-12, Ser-43, and Asn-101 each contribute to the a divalent metal cation site.

The protein belongs to the SurE nucleotidase family. Requires a divalent metal cation as cofactor.

It is found in the cytoplasm. It carries out the reaction a ribonucleoside 5'-phosphate + H2O = a ribonucleoside + phosphate. Its function is as follows. Nucleotidase that shows phosphatase activity on nucleoside 5'-monophosphates. The polypeptide is 5'-nucleotidase SurE (Prochlorococcus marinus (strain MIT 9211)).